Consider the following 427-residue polypeptide: 3-phosphoshikimate 1-carboxyvinyltransferase (427 aa).

The 3-phosphoshikimate site is built by Lys22, Ser23, and Arg27. Lys22 contributes to the phosphoenolpyruvate binding site. Phosphoenolpyruvate-binding residues include Gly96 and Arg124. 3-phosphoshikimate-binding residues include Ser169, Ser170, Gln171, Ser197, Asp313, Asn336, and Lys340. Residue Gln171 participates in phosphoenolpyruvate binding. The active-site Proton acceptor is the Asp313. 3 residues coordinate phosphoenolpyruvate: Arg344, Arg386, and Lys411.

Belongs to the EPSP synthase family. Monomer.

It is found in the cytoplasm. The enzyme catalyses 3-phosphoshikimate + phosphoenolpyruvate = 5-O-(1-carboxyvinyl)-3-phosphoshikimate + phosphate. Its pathway is metabolic intermediate biosynthesis; chorismate biosynthesis; chorismate from D-erythrose 4-phosphate and phosphoenolpyruvate: step 6/7. Catalyzes the transfer of the enolpyruvyl moiety of phosphoenolpyruvate (PEP) to the 5-hydroxyl of shikimate-3-phosphate (S3P) to produce enolpyruvyl shikimate-3-phosphate and inorganic phosphate. This Salmonella typhimurium (strain LT2 / SGSC1412 / ATCC 700720) protein is 3-phosphoshikimate 1-carboxyvinyltransferase.